Reading from the N-terminus, the 508-residue chain is Aspartyl/glutamyl-tRNA(Asn/Gln) amidotransferase subunit B (508 aa).

It belongs to the GatB/GatE family. GatB subfamily. Heterotrimer of A, B and C subunits.

It carries out the reaction L-glutamyl-tRNA(Gln) + L-glutamine + ATP + H2O = L-glutaminyl-tRNA(Gln) + L-glutamate + ADP + phosphate + H(+). The enzyme catalyses L-aspartyl-tRNA(Asn) + L-glutamine + ATP + H2O = L-asparaginyl-tRNA(Asn) + L-glutamate + ADP + phosphate + 2 H(+). Its function is as follows. Allows the formation of correctly charged Asn-tRNA(Asn) or Gln-tRNA(Gln) through the transamidation of misacylated Asp-tRNA(Asn) or Glu-tRNA(Gln) in organisms which lack either or both of asparaginyl-tRNA or glutaminyl-tRNA synthetases. The reaction takes place in the presence of glutamine and ATP through an activated phospho-Asp-tRNA(Asn) or phospho-Glu-tRNA(Gln). The polypeptide is Aspartyl/glutamyl-tRNA(Asn/Gln) amidotransferase subunit B (Salinibacter ruber (strain DSM 13855 / M31)).